Here is a 342-residue protein sequence, read N- to C-terminus: Sideroflexin-5 (342 aa).

A compositionally biased stretch (low complexity) spans 1 to 24 (MADTATTASAASAAASASNASSDA). The disordered stretch occupies residues 1–29 (MADTATTASAASAAASASNASSDAPPFQL). Helical transmembrane passes span 105–125 (IFMPFRMSGYIPFGTPIVVGL), 165–185 (FIQGYLGAVISAVSIAVGLNV), 256–276 (LTRVVLPMPILVLPPIVMSML), and 289–309 (LLPVHSLVCLAAFGLALPLAI).

The protein belongs to the sideroflexin family. Specifically expressed in the brain.

It is found in the mitochondrion inner membrane. It carries out the reaction citrate(in) = citrate(out). In terms of biological role, mitochondrial amino-acid transporter. Transports citrate. Does not act as a serine transporter: not able to mediate transport of serine into mitochondria. In brown adipose tissue, plays a role in the regulation of UCP1-dependent thermogenesis probably by supporting mitochondrial glycerol-3-phosphate utilization. The protein is Sideroflexin-5 of Rattus norvegicus (Rat).